Consider the following 402-residue polypeptide: S-adenosylmethionine synthase (402 aa).

Residue 137–142 (GQGSAD) coordinates ATP.

The protein belongs to the AdoMet synthase 2 family. Mg(2+) serves as cofactor.

The enzyme catalyses L-methionine + ATP + H2O = S-adenosyl-L-methionine + phosphate + diphosphate. It participates in amino-acid biosynthesis; S-adenosyl-L-methionine biosynthesis; S-adenosyl-L-methionine from L-methionine: step 1/1. In terms of biological role, catalyzes the formation of S-adenosylmethionine from methionine and ATP. The chain is S-adenosylmethionine synthase from Pyrobaculum islandicum (strain DSM 4184 / JCM 9189 / GEO3).